Consider the following 212-residue polypeptide: Shuttling pre-60S factor ECM1 (212 aa).

2 disordered regions span residues K28 to D48 and S188 to E212. A Phosphoserine modification is found at S188. Over residues E191–N201 the composition is skewed to polar residues.

This sequence belongs to the ECM1 family. As to quaternary structure, associates with the pre-60S ribosomal particle and the nucleopore complex.

It localises to the nucleus. It is found in the nucleolus. Its subcellular location is the cytoplasm. Pre-ribosomal factor involved in 60S ribosomal protein subunit export from the nucleus. In Saccharomyces cerevisiae (strain ATCC 204508 / S288c) (Baker's yeast), this protein is Shuttling pre-60S factor ECM1 (ECM1).